Reading from the N-terminus, the 85-residue chain is RNA-binding protein Hfq (85 aa).

The 60-residue stretch at 9 to 68 (DPFLNELRKEKVPVSVFLVNGIKLHGIIDSFDQYVVMLKNSITQMVYKHAISTVVPSRMV) folds into the Sm domain.

The protein belongs to the Hfq family. Homohexamer.

In terms of biological role, RNA chaperone that binds small regulatory RNA (sRNAs) and mRNAs to facilitate mRNA translational regulation in response to envelope stress, environmental stress and changes in metabolite concentrations. Also binds with high specificity to tRNAs. The protein is RNA-binding protein Hfq of Legionella pneumophila (strain Paris).